Reading from the N-terminus, the 992-residue chain is Protein translocase subunit SecA (992 aa).

Residues glutamine 86, 104–108, and aspartate 535 contribute to the ATP site; that span reads GEGKT. Residues 885 to 910 form a disordered region; sequence IAGGSSEVEQTRKPQRRTVQQIGRND. The Zn(2+) site is built by cysteine 912, cysteine 914, cysteine 923, and histidine 924. The interval 965-992 is disordered; sequence IDNGTLPAASPKTPRGRQPQAVPRGKKR.

Belongs to the SecA family. As to quaternary structure, monomer and homodimer. Part of the essential Sec protein translocation apparatus which comprises SecA, SecYEG and auxiliary proteins SecDF. Other proteins may also be involved. The cofactor is Zn(2+).

The protein resides in the cell membrane. It is found in the cytoplasm. The catalysed reaction is ATP + H2O + cellular proteinSide 1 = ADP + phosphate + cellular proteinSide 2.. Functionally, part of the Sec protein translocase complex. Interacts with the SecYEG preprotein conducting channel. Has a central role in coupling the hydrolysis of ATP to the transfer of proteins into and across the cell membrane, serving as an ATP-driven molecular motor driving the stepwise translocation of polypeptide chains across the membrane. The chain is Protein translocase subunit SecA from Chloroflexus aggregans (strain MD-66 / DSM 9485).